A 1409-amino-acid chain; its full sequence is DNA-directed RNA polymerase subunit beta' (1409 aa).

The Zn(2+) site is built by C69, C71, C84, and C87. Residues D461, D463, and D465 each coordinate Mg(2+). Residues C805, C879, C886, and C889 each coordinate Zn(2+).

This sequence belongs to the RNA polymerase beta' chain family. In terms of assembly, the RNAP catalytic core consists of 2 alpha, 1 beta, 1 beta' and 1 omega subunit. When a sigma factor is associated with the core the holoenzyme is formed, which can initiate transcription. The cofactor is Mg(2+). It depends on Zn(2+) as a cofactor.

The enzyme catalyses RNA(n) + a ribonucleoside 5'-triphosphate = RNA(n+1) + diphosphate. Its function is as follows. DNA-dependent RNA polymerase catalyzes the transcription of DNA into RNA using the four ribonucleoside triphosphates as substrates. This chain is DNA-directed RNA polymerase subunit beta', found in Anaplasma phagocytophilum (strain HZ).